Reading from the N-terminus, the 263-residue chain is Phosphoribosylaminoimidazole-succinocarboxamide synthase (263 aa).

Residues 239 to 263 (MNENEPPKPAGPVLVSSKPDGETRH) form a disordered region.

It belongs to the SAICAR synthetase family.

The catalysed reaction is 5-amino-1-(5-phospho-D-ribosyl)imidazole-4-carboxylate + L-aspartate + ATP = (2S)-2-[5-amino-1-(5-phospho-beta-D-ribosyl)imidazole-4-carboxamido]succinate + ADP + phosphate + 2 H(+). It participates in purine metabolism; IMP biosynthesis via de novo pathway; 5-amino-1-(5-phospho-D-ribosyl)imidazole-4-carboxamide from 5-amino-1-(5-phospho-D-ribosyl)imidazole-4-carboxylate: step 1/2. This is Phosphoribosylaminoimidazole-succinocarboxamide synthase from Chelativorans sp. (strain BNC1).